A 126-amino-acid polypeptide reads, in one-letter code: Large ribosomal subunit protein mL55 (126 aa).

Residues 1–34 (MSAKGSLLRLLWQCGMTRAAPESCRYLYTSSWRA) constitute a mitochondrion transit peptide. Residue Ser86 is modified to Phosphoserine.

This sequence belongs to the mitochondrion-specific ribosomal protein mL55 family. As to quaternary structure, component of the mitochondrial ribosome large subunit (39S) which comprises a 16S rRNA and about 50 distinct proteins.

The protein localises to the mitochondrion. This is Large ribosomal subunit protein mL55 (MRPL55) from Bos taurus (Bovine).